Here is a 200-residue protein sequence, read N- to C-terminus: Superoxide dismutase [Mn] 1 (200 aa).

The Mn(2+) site is built by histidine 29, histidine 76, aspartate 158, and histidine 162.

The protein belongs to the iron/manganese superoxide dismutase family. In terms of assembly, homodimer or homotetramer. Mn(2+) is required as a cofactor.

It catalyses the reaction 2 superoxide + 2 H(+) = H2O2 + O2. Its activity is regulated as follows. Inhibited by hydrogen peroxide. Is resistant to cyanide and azide inhibition. Functionally, destroys superoxide anion radicals which are normally produced within the cells and which are toxic to biological systems. This Halobacterium salinarum (strain ATCC 700922 / JCM 11081 / NRC-1) (Halobacterium halobium) protein is Superoxide dismutase [Mn] 1 (sod1).